A 106-amino-acid polypeptide reads, in one-letter code: Thioredoxin-2 (106 aa).

The Thioredoxin domain occupies 1–106; it reads MVYQVKDKAD…RLEDVIKANI (106 aa). Catalysis depends on nucleophile residues cysteine 32 and cysteine 35. Cysteine 32 and cysteine 35 form a disulfide bridge.

It belongs to the thioredoxin family. In terms of assembly, monomer.

Its function is as follows. Participates in various redox reactions through the reversible oxidation of its active center dithiol to a disulfide and catalyzes dithiol-disulfide exchange reactions. As a reducing substrate of peroxiredoxin 1, thioredoxin 2 is preferred over thioredoxin 1. In Drosophila melanogaster (Fruit fly), this protein is Thioredoxin-2.